The chain runs to 124 residues: UPF0231 protein Shewana3_0655 (124 aa).

The protein belongs to the UPF0231 family.

This is UPF0231 protein Shewana3_0655 from Shewanella sp. (strain ANA-3).